Reading from the N-terminus, the 219-residue chain is Redox-sensing transcriptional repressor Rex (219 aa).

Residues 17 to 56 constitute a DNA-binding region (H-T-H motif); the sequence is RYLRYVEDLLNHDIMRISSSELSQRMGYTASQVRQDFNNF. 91–96 contacts NAD(+); it reads GVGNLG.

This sequence belongs to the transcriptional regulatory Rex family. In terms of assembly, homodimer.

It localises to the cytoplasm. In terms of biological role, modulates transcription in response to changes in cellular NADH/NAD(+) redox state. The chain is Redox-sensing transcriptional repressor Rex from Caldicellulosiruptor saccharolyticus (strain ATCC 43494 / DSM 8903 / Tp8T 6331).